The chain runs to 313 residues: Aspartate carbamoyltransferase catalytic subunit (313 aa).

Residues R58 and T59 each coordinate carbamoyl phosphate. K86 serves as a coordination point for L-aspartate. The carbamoyl phosphate site is built by R108, H136, and Q139. L-aspartate-binding residues include R169 and R223. Residues G265 and P266 each contribute to the carbamoyl phosphate site.

It belongs to the aspartate/ornithine carbamoyltransferase superfamily. ATCase family. As to quaternary structure, heterododecamer (2C3:3R2) of six catalytic PyrB chains organized as two trimers (C3), and six regulatory PyrI chains organized as three dimers (R2).

The enzyme catalyses carbamoyl phosphate + L-aspartate = N-carbamoyl-L-aspartate + phosphate + H(+). The protein operates within pyrimidine metabolism; UMP biosynthesis via de novo pathway; (S)-dihydroorotate from bicarbonate: step 2/3. Its function is as follows. Catalyzes the condensation of carbamoyl phosphate and aspartate to form carbamoyl aspartate and inorganic phosphate, the committed step in the de novo pyrimidine nucleotide biosynthesis pathway. The protein is Aspartate carbamoyltransferase catalytic subunit of Anaeromyxobacter sp. (strain K).